Here is a 440-residue protein sequence, read N- to C-terminus: Glycerophosphocholine cholinephosphodiesterase ENPP6 (440 aa).

An N-terminal signal peptide occupies residues 1-22 (MAVKLGTLLLALALGLAQPASA). Positions 32, 71, and 92 each coordinate substrate. Positions 32 and 71 each coordinate Zn(2+). Residue Ser71 is the Nucleophile of the active site. The residue at position 71 (Ser71) is a Phosphoserine. Residues Asn100 and Asn118 are each glycosylated (N-linked (GlcNAc...) asparagine). Cys142 and Cys154 are disulfide-bonded. Residue Asp193 participates in substrate binding. Residues Asp193, His197, Asp240, and His241 each contribute to the Zn(2+) site. A substrate-binding site is contributed by His241. N-linked (GlcNAc...) asparagine glycosylation occurs at Asn341. Position 354 (His354) interacts with substrate. Residue His354 coordinates Zn(2+). An N-linked (GlcNAc...) asparagine glycan is attached at Asn404. Ala418 is lipidated: GPI-anchor amidated alanine. The propeptide at 419-440 (GTTPPVQPSHCALALILLFLLA) is removed in mature form.

Belongs to the nucleotide pyrophosphatase/phosphodiesterase family. Homodimer; disulfide-linked. Homotetramer. Requires Zn(2+) as cofactor.

Its subcellular location is the cell membrane. It carries out the reaction sn-glycerol 3-phosphocholine + H2O = phosphocholine + glycerol + H(+). The catalysed reaction is a 1-acyl-sn-glycero-3-phosphocholine + H2O = a 1-acyl-sn-glycerol + phosphocholine + H(+). The enzyme catalyses a 1-O-alkyl-sn-glycero-3-phosphocholine + H2O = a 1-O-alkyl-sn-glycerol + phosphocholine + H(+). It catalyses the reaction 1-dodecanoyl-sn-glycero-3-phosphocholine + H2O = 1-dodecanoyl-sn-glycerol + phosphocholine + H(+). It carries out the reaction 1-hexadecanoyl-sn-glycero-3-phosphocholine + H2O = 1-hexadecanoyl-sn-glycerol + phosphocholine + H(+). The catalysed reaction is 1-(5Z,8Z,11Z,14Z-eicosatetraenoyl)-sn-glycero-3-phosphocholine + H2O = 1-(5Z,8Z,11Z,14Z-eicosatetraenoyl)-sn-glycerol + phosphocholine + H(+). The enzyme catalyses 1-tetradecanoyl-sn-glycero-3-phosphocholine + H2O = 1-tetradecanoyl-sn-glycerol + phosphocholine + H(+). It catalyses the reaction sphing-4-enine-phosphocholine + H2O = sphing-4-enine + phosphocholine + H(+). It carries out the reaction 1-(9Z-octadecenoyl)-sn-glycero-3-phosphocholine + H2O = 1-(9Z-octadecenoyl)-sn-glycerol + phosphocholine + H(+). The catalysed reaction is 1-(9Z,12Z)-octadecadienoyl-sn-glycero-3-phosphocholine + H2O = 1-(9Z,12Z-octadecadienoyl)-sn-glycerol + phosphocholine + H(+). The enzyme catalyses glycero-2-phosphocholine + H2O = phosphocholine + glycerol + H(+). With respect to regulation, inhibited by EDTA and EGTA in vitro. Functionally, choline-specific glycerophosphodiesterase that hydrolyzes glycerophosphocholine (GPC) and lysophosphatidylcholine (LPC) and contributes to supplying choline to the cells. Has a preference for LPC with short (12:0 and 14:0) or polyunsaturated (18:2 and 20:4) fatty acids. In vitro, hydrolyzes only choline-containing lysophospholipids, such as sphingosylphosphorylcholine (SPC), platelet-activating factor (PAF) and lysoPAF, but not other lysophospholipids. This chain is Glycerophosphocholine cholinephosphodiesterase ENPP6, found in Pongo abelii (Sumatran orangutan).